Here is a 229-residue protein sequence, read N- to C-terminus: Flagellar L-ring protein (229 aa).

Residues 1-25 (MKQVRLPSSATVRAACAVAVAALAG) form the signal peptide. The N-palmitoyl cysteine moiety is linked to residue Cys-26. Residue Cys-26 is the site of S-diacylglycerol cysteine attachment.

The protein belongs to the FlgH family. In terms of assembly, the basal body constitutes a major portion of the flagellar organelle and consists of four rings (L,P,S, and M) mounted on a central rod.

The protein localises to the cell outer membrane. It localises to the bacterial flagellum basal body. In terms of biological role, assembles around the rod to form the L-ring and probably protects the motor/basal body from shearing forces during rotation. The polypeptide is Flagellar L-ring protein (Burkholderia orbicola (strain AU 1054)).